The sequence spans 470 residues: 6-phosphofructo-2-kinase/fructose-2,6-bisphosphatase (470 aa).

Residues 1 to 249 form a 6-phosphofructo-2-kinase region; it reads MADRLRELTQ…VYYLMNIHVT (249 aa). Position 31 is a phosphoserine; by PKA (serine 31). Residue 47 to 55 coordinates ATP; the sequence is GLPARGKTY. Beta-D-fructose 6-phosphate contacts are provided by arginine 80 and arginine 104. Aspartate 130 is a catalytic residue. The beta-D-fructose 6-phosphate site is built by threonine 132 and arginine 138. Cysteine 160 is an active-site residue. ATP is bound at residue 169-174; the sequence is NITQVK. Beta-D-fructose 6-phosphate-binding residues include lysine 174, arginine 195, and tyrosine 199. Residues 250 to 470 are fructose-2,6-bisphosphatase; it reads PRSIYLSRHG…EALDTVPEHF (221 aa). Arginine 257 contributes to the beta-D-fructose 2,6-bisphosphate binding site. Histidine 258 acts as the Tele-phosphohistidine intermediate in catalysis. Residues asparagine 264 and glycine 270 each contribute to the beta-D-fructose 2,6-bisphosphate site. The active-site Proton donor/acceptor is glutamate 327. Residues tyrosine 338, arginine 352, lysine 356, tyrosine 367, glutamine 393, and arginine 397 each coordinate beta-D-fructose 2,6-bisphosphate. An ATP-binding site is contributed by 349–352; that stretch reads FALR. Residues 393–397 and tyrosine 429 each bind ATP; that span reads QAVMR.

This sequence in the C-terminal section; belongs to the phosphoglycerate mutase family. Homodimer.

It carries out the reaction beta-D-fructose 2,6-bisphosphate + H2O = beta-D-fructose 6-phosphate + phosphate. The enzyme catalyses beta-D-fructose 6-phosphate + ATP = beta-D-fructose 2,6-bisphosphate + ADP + H(+). Phosphorylation results in inhibition of the kinase activity. In terms of biological role, synthesis and degradation of fructose 2,6-bisphosphate. In Aquarana catesbeiana (American bullfrog), this protein is 6-phosphofructo-2-kinase/fructose-2,6-bisphosphatase.